The following is a 386-amino-acid chain: uncharacterized protein (386 aa).

This sequence belongs to the mimivirus L17x/L18x family.

This is an uncharacterized protein from Acanthamoeba polyphaga mimivirus (APMV).